The sequence spans 187 residues: Troponin I, slow skeletal muscle (187 aa).

At proline 2 the chain carries N-acetylproline. The segment at proline 2–arginine 48 is involved in binding TNC. Serine 58 is subject to Phosphoserine. Positions leucine 97–valine 118 are involved in binding TNC and actin.

This sequence belongs to the troponin I family. Binds to actin and tropomyosin.

Its function is as follows. Troponin I is the inhibitory subunit of troponin, the thin filament regulatory complex which confers calcium-sensitivity to striated muscle actomyosin ATPase activity. The polypeptide is Troponin I, slow skeletal muscle (Tnni1) (Mus musculus (Mouse)).